The primary structure comprises 213 residues: Kynurenine formamidase (213 aa).

Trp-18 is a substrate binding site. His-48, His-52, and Asp-54 together coordinate Zn(2+). Residue His-58 is the Proton donor/acceptor of the active site. His-160 and Glu-172 together coordinate Zn(2+).

Belongs to the Cyclase 1 superfamily. KynB family. Homodimer. Zn(2+) serves as cofactor.

The catalysed reaction is N-formyl-L-kynurenine + H2O = L-kynurenine + formate + H(+). It functions in the pathway amino-acid degradation; L-tryptophan degradation via kynurenine pathway; L-kynurenine from L-tryptophan: step 2/2. In terms of biological role, catalyzes the hydrolysis of N-formyl-L-kynurenine to L-kynurenine, the second step in the kynurenine pathway of tryptophan degradation. In Burkholderia cenocepacia (strain HI2424), this protein is Kynurenine formamidase.